The sequence spans 252 residues: 2-succinyl-6-hydroxy-2,4-cyclohexadiene-1-carboxylate synthase (252 aa).

Belongs to the AB hydrolase superfamily. MenH family. Monomer.

The enzyme catalyses 5-enolpyruvoyl-6-hydroxy-2-succinyl-cyclohex-3-ene-1-carboxylate = (1R,6R)-6-hydroxy-2-succinyl-cyclohexa-2,4-diene-1-carboxylate + pyruvate. Its pathway is quinol/quinone metabolism; 1,4-dihydroxy-2-naphthoate biosynthesis; 1,4-dihydroxy-2-naphthoate from chorismate: step 3/7. It participates in quinol/quinone metabolism; menaquinone biosynthesis. Its function is as follows. Catalyzes a proton abstraction reaction that results in 2,5-elimination of pyruvate from 2-succinyl-5-enolpyruvyl-6-hydroxy-3-cyclohexene-1-carboxylate (SEPHCHC) and the formation of 2-succinyl-6-hydroxy-2,4-cyclohexadiene-1-carboxylate (SHCHC). This is 2-succinyl-6-hydroxy-2,4-cyclohexadiene-1-carboxylate synthase from Salmonella schwarzengrund (strain CVM19633).